A 265-amino-acid polypeptide reads, in one-letter code: Hemin import ATP-binding protein HmuV (265 aa).

Residues Leu-10–Asp-247 form the ABC transporter domain. Gly-42 to Ser-49 contributes to the ATP binding site.

Belongs to the ABC transporter superfamily. Heme (hemin) importer (TC 3.A.1.14.5) family. As to quaternary structure, the complex is composed of two ATP-binding proteins (HmuV), two transmembrane proteins (HmuU) and a solute-binding protein (HmuT).

The protein localises to the cell inner membrane. Part of the ABC transporter complex HmuTUV involved in hemin import. Responsible for energy coupling to the transport system. The chain is Hemin import ATP-binding protein HmuV from Pectobacterium atrosepticum (strain SCRI 1043 / ATCC BAA-672) (Erwinia carotovora subsp. atroseptica).